The sequence spans 66 residues: DNA gyrase inhibitor YacG (66 aa).

Zn(2+) contacts are provided by cysteine 9, cysteine 12, cysteine 28, and cysteine 32.

Belongs to the DNA gyrase inhibitor YacG family. Interacts with GyrB. Zn(2+) is required as a cofactor.

In terms of biological role, inhibits all the catalytic activities of DNA gyrase by preventing its interaction with DNA. Acts by binding directly to the C-terminal domain of GyrB, which probably disrupts DNA binding by the gyrase. This is DNA gyrase inhibitor YacG from Pseudomonas aeruginosa (strain LESB58).